The primary structure comprises 623 residues: Endoglucanase 7 (623 aa).

Topologically, residues 1–79 are cytoplasmic; the sequence is MHPGNVWGGS…LGCVSVSRTV (79 aa). Residues 80–100 form a helical; Signal-anchor for type II membrane protein membrane-spanning segment; the sequence is FLWTVGSIAVLFLVVALPIII. Over 101-623 the chain is Extracellular; that stretch reads VKSLPRHKSA…TPPPPKAWKP (523 aa). N-linked (GlcNAc...) asparagine glycans are attached at residues Asn116, Asn221, Asn328, Asn349, Asn412, Asn429, and Asn464. The active site involves His517. Asn548 is a glycosylation site (N-linked (GlcNAc...) asparagine). Residue Asp565 is part of the active site. Residue Asn571 is glycosylated (N-linked (GlcNAc...) asparagine). Residue Glu574 is part of the active site.

It belongs to the glycosyl hydrolase 9 (cellulase E) family. In terms of tissue distribution, expressed in basal region of leaf blade and proximal parts of leaf and floral organ.

It localises to the membrane. The catalysed reaction is Endohydrolysis of (1-&gt;4)-beta-D-glucosidic linkages in cellulose, lichenin and cereal beta-D-glucans.. The sequence is that of Endoglucanase 7 (KOR2) from Arabidopsis thaliana (Mouse-ear cress).